Here is a 251-residue protein sequence, read N- to C-terminus: Imidazole glycerol phosphate synthase subunit HisF (251 aa).

Active-site residues include D11 and D130.

The protein belongs to the HisA/HisF family. Heterodimer of HisH and HisF.

The protein resides in the cytoplasm. It carries out the reaction 5-[(5-phospho-1-deoxy-D-ribulos-1-ylimino)methylamino]-1-(5-phospho-beta-D-ribosyl)imidazole-4-carboxamide + L-glutamine = D-erythro-1-(imidazol-4-yl)glycerol 3-phosphate + 5-amino-1-(5-phospho-beta-D-ribosyl)imidazole-4-carboxamide + L-glutamate + H(+). It participates in amino-acid biosynthesis; L-histidine biosynthesis; L-histidine from 5-phospho-alpha-D-ribose 1-diphosphate: step 5/9. Functionally, IGPS catalyzes the conversion of PRFAR and glutamine to IGP, AICAR and glutamate. The HisF subunit catalyzes the cyclization activity that produces IGP and AICAR from PRFAR using the ammonia provided by the HisH subunit. The polypeptide is Imidazole glycerol phosphate synthase subunit HisF (Chlorobaculum parvum (strain DSM 263 / NCIMB 8327) (Chlorobium vibrioforme subsp. thiosulfatophilum)).